A 308-amino-acid polypeptide reads, in one-letter code: ADP,ATP carrier protein (308 aa).

Solcar repeat units follow at residues 6–99 (KNFM…FKRM), 110–203 (KWFA…LKPV), and 211–297 (NNFL…LQVI). A run of 5 helical transmembrane segments spans residues 8–35 (FMVD…VKLL), 76–100 (TANV…KRMF), 108–128 (YWKW…VSLS), 179–200 (FNIS…YDSL), and 214–234 (LAAF…SYPI). Arginine 81 and lysine 93 together coordinate ADP. Arginine 238 contacts ADP. Positions 238–243 (RRRMMM) are important for transport activity. Positions 238-243 (RRRMMM) match the Nucleotide carrier signature motif motif. Residues 274 to 294 (AGANILRAVAGAGVLAGYDQL) form a helical membrane-spanning segment.

This sequence belongs to the mitochondrial carrier (TC 2.A.29) family. In terms of assembly, monomer.

The protein resides in the mitochondrion inner membrane. The catalysed reaction is ADP(in) + ATP(out) = ADP(out) + ATP(in). The matrix-open state (m-state) is inhibited by the membrane-permeable bongkrekic acid (BKA). The cytoplasmic-open state (c-state) is inhibited by the membrane-impermeable toxic inhibitor carboxyatractyloside (CATR). Its function is as follows. ADP:ATP antiporter that mediates import of ADP into the mitochondrial matrix for ATP synthesis, and export of ATP out to fuel the cell. Cycles between the cytoplasmic-open state (c-state) and the matrix-open state (m-state): operates by the alternating access mechanism with a single substrate-binding site intermittently exposed to either the cytosolic (c-state) or matrix (m-state) side of the inner mitochondrial membrane. This chain is ADP,ATP carrier protein (ABT), found in Chlamydomonas reinhardtii (Chlamydomonas smithii).